A 447-amino-acid polypeptide reads, in one-letter code: MKPVIALVGRPNVGKSTIFNRLTKTRDAIVADFAGLTRDRHYGNGKLGSHEYIVIDTGGFEPDAASGIYKEMAKQTRQAVAEADVVIFVVDARAGISAQDHDIANFLRKLGKPTVLTANKAEGMTEGVQFSEFFELGLGEVLPVSASHGQGMRSLVDLALAPLHLADPDEEAEPQDPSVIRLAVAGRPNVGKSTLINTWLGEERLVSFDLPGTTRDAISVPFERAGQKFELIDTAGLRRKGKVFEAIEKFSVVKTLQAIEGANVVLLLLDATQGVTDQDAHIAGYILESGRAVVLAINKWDAVDAYQRETLERSIETRLAFLKFASIHKISAIKRQGLAPVWKSIVQAHASANRKMSTPVLTRLLLEAVQFQQPQRSGMFRPKMRYAHQGGMNPPIIIIHGNSLEHVTEAYKRYLEGRFRKEFDLVGTPMRIQMKSSHNPFTDKDSA.

EngA-type G domains lie at 3–167 and 180–353; these read PVIA…HLAD and IRLA…ASAN. Residues 9–16, 56–60, 119–122, 186–193, 233–237, and 298–301 contribute to the GTP site; these read GRPNVGKS, DTGGF, NKAE, DTAGL, and NKWD. Residues 354–438 form the KH-like domain; the sequence is RKMSTPVLTR…PMRIQMKSSH (85 aa).

It belongs to the TRAFAC class TrmE-Era-EngA-EngB-Septin-like GTPase superfamily. EngA (Der) GTPase family. As to quaternary structure, associates with the 50S ribosomal subunit.

Its function is as follows. GTPase that plays an essential role in the late steps of ribosome biogenesis. This is GTPase Der from Polaromonas sp. (strain JS666 / ATCC BAA-500).